Consider the following 334-residue polypeptide: Fructose-1,6-bisphosphatase class 1 (334 aa).

Mg(2+) is bound by residues glutamate 89, aspartate 112, leucine 114, and aspartate 115. Residues 115 to 118 (DGSS), asparagine 208, tyrosine 241, 259 to 261 (YLY), and lysine 271 contribute to the substrate site. Glutamate 277 is a Mg(2+) binding site.

The protein belongs to the FBPase class 1 family. Homotetramer. Requires Mg(2+) as cofactor.

It localises to the cytoplasm. The catalysed reaction is beta-D-fructose 1,6-bisphosphate + H2O = beta-D-fructose 6-phosphate + phosphate. The protein operates within carbohydrate biosynthesis; gluconeogenesis. In Pectobacterium atrosepticum (strain SCRI 1043 / ATCC BAA-672) (Erwinia carotovora subsp. atroseptica), this protein is Fructose-1,6-bisphosphatase class 1.